Here is a 365-residue protein sequence, read N- to C-terminus: Phospho-N-acetylmuramoyl-pentapeptide-transferase (365 aa).

10 helical membrane passes run 3–23, 54–74, 81–101, 119–139, 162–182, 198–218, 239–259, 263–283, 289–309, and 342–362; these read HIII…PILI, GIAI…ASVF, PTAS…LGFL, GKLL…LLFL, IAIG…YILV, LAAG…FWQF, LSIL…WNAA, IFMG…LSVT, LMIV…IQVV, and FWLL…ADWL.

It belongs to the glycosyltransferase 4 family. MraY subfamily. The cofactor is Mg(2+).

It is found in the cell membrane. The enzyme catalyses UDP-N-acetyl-alpha-D-muramoyl-L-alanyl-gamma-D-glutamyl-meso-2,6-diaminopimeloyl-D-alanyl-D-alanine + di-trans,octa-cis-undecaprenyl phosphate = di-trans,octa-cis-undecaprenyl diphospho-N-acetyl-alpha-D-muramoyl-L-alanyl-D-glutamyl-meso-2,6-diaminopimeloyl-D-alanyl-D-alanine + UMP. It functions in the pathway cell wall biogenesis; peptidoglycan biosynthesis. In terms of biological role, catalyzes the initial step of the lipid cycle reactions in the biosynthesis of the cell wall peptidoglycan: transfers peptidoglycan precursor phospho-MurNAc-pentapeptide from UDP-MurNAc-pentapeptide onto the lipid carrier undecaprenyl phosphate, yielding undecaprenyl-pyrophosphoryl-MurNAc-pentapeptide, known as lipid I. The protein is Phospho-N-acetylmuramoyl-pentapeptide-transferase of Corynebacterium kroppenstedtii (strain DSM 44385 / JCM 11950 / CIP 105744 / CCUG 35717).